A 392-amino-acid chain; its full sequence is Chaperone protein DnaJ (392 aa).

Residues 2 to 67 form the J domain; that stretch reads DYYDVLGVSK…QKRESYDRYG (66 aa). A CR-type zinc finger spans residues 149–227; the sequence is GVEKELLVSG…CRGQGRIKDK (79 aa). Zn(2+) contacts are provided by C162, C165, C179, C182, C201, C204, C215, and C218. CXXCXGXG motif repeat units follow at residues 162–169, 179–186, 201–208, and 215–222; these read CETCLGSG, CDRCKGSG, CPECGGEG, and CSNCRGQG.

The protein belongs to the DnaJ family. In terms of assembly, homodimer. Zn(2+) is required as a cofactor.

The protein resides in the cytoplasm. Functionally, participates actively in the response to hyperosmotic and heat shock by preventing the aggregation of stress-denatured proteins and by disaggregating proteins, also in an autonomous, DnaK-independent fashion. Unfolded proteins bind initially to DnaJ; upon interaction with the DnaJ-bound protein, DnaK hydrolyzes its bound ATP, resulting in the formation of a stable complex. GrpE releases ADP from DnaK; ATP binding to DnaK triggers the release of the substrate protein, thus completing the reaction cycle. Several rounds of ATP-dependent interactions between DnaJ, DnaK and GrpE are required for fully efficient folding. Also involved, together with DnaK and GrpE, in the DNA replication of plasmids through activation of initiation proteins. The protein is Chaperone protein DnaJ of Chlamydia caviae (strain ATCC VR-813 / DSM 19441 / 03DC25 / GPIC) (Chlamydophila caviae).